The primary structure comprises 312 residues: Olfactory receptor 6C70 (312 aa).

Residues 1 to 22 lie on the Extracellular side of the membrane; that stretch reads MKNHTRQIEFILLGLTDNSQLQ. Residue Asn-3 is glycosylated (N-linked (GlcNAc...) asparagine). A helical membrane pass occupies residues 23-43; the sequence is IVIFLFLLLNCVLSMIGNFTI. At 44 to 63 the chain is on the cytoplasmic side; the sequence is IALILLDSQLKTPMYFFLRN. A helical membrane pass occupies residues 64–84; the sequence is FSFLEISFTTACIPRFLITIV. The Extracellular portion of the chain corresponds to 85–95; the sequence is TREKTISCNGC. Cys-95 and Cys-177 are oxidised to a cystine. A helical transmembrane segment spans residues 96–116; it reads ISQLFFYIFLGVTEFFLLAAL. Residues 117–141 are Cytoplasmic-facing; sequence SYDRYVAICKPLRYMSIMSNKVCYQ. The helical transmembrane segment at 142–162 threads the bilayer; sequence LVFSSWVTGFLIIFTPLILGL. At 163-194 the chain is on the extracellular side; it reads NLDFCASNIIDHFICDISLILQLSCSDTHLLE. The helical transmembrane segment at 195–215 threads the bilayer; sequence LIAFLLAVMTLIVTLFLVILS. Residues 216–237 are Cytoplasmic-facing; sequence YSYIIKTILKFPSAQQKKKAFS. Residues 238–258 traverse the membrane as a helical segment; sequence TCSSHMIVVSITYGSCMFIYI. At 259–272 the chain is on the extracellular side; that stretch reads KPSANERVALSKGV. Residues 273–290 form a helical membrane-spanning segment; it reads TVLNTSVAPLLNPFIYTL. Residues 291-312 are Cytoplasmic-facing; the sequence is RNQQVKQAFKAVFRKIFSASDK.

This sequence belongs to the G-protein coupled receptor 1 family.

The protein localises to the cell membrane. Functionally, odorant receptor. The chain is Olfactory receptor 6C70 (OR6C70) from Homo sapiens (Human).